A 354-amino-acid chain; its full sequence is Probable DNA repair protein RAD51 homolog 4 (354 aa).

115-122 contacts ATP; that stretch reads GNTSCGKT.

The protein belongs to the RecA family. RAD51 subfamily.

It localises to the nucleus. In terms of biological role, involved in the homologous recombination repair (HRR) pathway of double-stranded DNA breaks arising during DNA replication or induced by DNA-damaging agents. This is Probable DNA repair protein RAD51 homolog 4 (rad51d) from Dictyostelium discoideum (Social amoeba).